Reading from the N-terminus, the 256-residue chain is MSKDLISTDEYIKIKKKRKRIKKIVVLFIFLISILVTLCLKIPYFNIESIEIKGNVNIPKEIIKDSSTIKTGNNIFYTNKKDAIENISLNPYIEEVKITKKLPNKLEIYVKEREALFYNKVDKDFFIISKNGCLLEKRKEIKNMKLINLQGFEFNESKIGSALKAKDERGVKILNDFGVLLKNNASDVIFTQLDLRNLLDIRIYSNGICVKIGTSDQIEKKLNTAINILKRDELKKAKKGYVDVSYEGNPVFYIEK.

Residues Met1–Lys23 are Cytoplasmic-facing. Residues Ile24 to Tyr44 traverse the membrane as a helical segment. Residues Phe45–Arg113 enclose the POTRA domain. The Extracellular portion of the chain corresponds to Phe45 to Lys256.

The protein belongs to the FtsQ/DivIB family. DivIB subfamily.

The protein localises to the cell membrane. Cell division protein that may be involved in stabilizing or promoting the assembly of the division complex. In Clostridium botulinum (strain Loch Maree / Type A3), this protein is Cell division protein DivIB.